The sequence spans 363 residues: S-methylmethionine--homocysteine S-methyltransferase BHMT2 (363 aa).

Residues 11 to 305 (RGILERLESG…YHIRAIAEEL (295 aa)) form the Hcy-binding domain. Positions 208, 290, and 291 each coordinate Zn(2+). Residue Ser321 is modified to Phosphoserine.

Homotetramer. Requires Zn(2+) as cofactor.

The enzyme catalyses S-methyl-L-methionine + L-homocysteine = 2 L-methionine + H(+). It functions in the pathway amino-acid biosynthesis; L-methionine biosynthesis via de novo pathway; L-methionine from L-homocysteine (BhmT route): step 1/1. Involved in the regulation of homocysteine metabolism. Converts betaine and homocysteine to dimethylglycine and methionine, respectively. This reaction is also required for the irreversible oxidation of choline. This chain is S-methylmethionine--homocysteine S-methyltransferase BHMT2 (BHMT2), found in Pongo abelii (Sumatran orangutan).